Here is a 325-residue protein sequence, read N- to C-terminus: Aldo-keto reductase family 1 member A1 (325 aa).

Ala-2 carries the N-acetylalanine modification. Ser-4 is modified (phosphoserine). NADP(+) is bound by residues 11–20 (GQKMPLIGLG), Thr-21, and Trp-22. The residue at position 38 (Ser-38) is a Phosphoserine. Asp-45 provides a ligand contact to NADP(+). The active-site Proton donor is Tyr-50. Residue Lys-127 is modified to N6-acetyllysine; alternate. N6-succinyllysine; alternate is present on Lys-127. NADP(+)-binding residues include Ser-162, Asn-163, Ser-211, Leu-213, Ser-215, Ser-216, Lys-263, Ser-264, Val-265, Thr-266, Arg-269, and Asn-273. Residue Ser-211 is modified to Phosphoserine.

The protein belongs to the aldo/keto reductase family. As to quaternary structure, monomer.

The protein resides in the cytoplasm. The protein localises to the cytosol. It is found in the apical cell membrane. It carries out the reaction a primary alcohol + NADP(+) = an aldehyde + NADPH + H(+). The catalysed reaction is L-gulonate + NADP(+) = aldehydo-D-glucuronate + NADPH + H(+). The enzyme catalyses L-gulono-1,4-lactone + NADP(+) = D-glucurono-3,6-lactone + NADPH + H(+). It catalyses the reaction allyl alcohol + NADP(+) = acrolein + NADPH + H(+). It carries out the reaction glycerol + NADP(+) = D-glyceraldehyde + NADPH + H(+). The catalysed reaction is glycerol + NADP(+) = L-glyceraldehyde + NADPH + H(+). The enzyme catalyses hydroxyacetone + NADP(+) = methylglyoxal + NADPH + H(+). It catalyses the reaction 3-deoxyfructose + NADP(+) = 3-deoxyglucosone + NADPH + H(+). It carries out the reaction (R)-mevalonate + NADP(+) = (R)-mevaldate + NADPH + H(+). The catalysed reaction is pyridine 3-methanol + NADP(+) = pyridine-3-carbaldehyde + NADPH + H(+). The enzyme catalyses S-nitroso-CoA + NADPH + H(+) = sulfinamide-CoA + NADP(+). It catalyses the reaction S-nitrosoglutathione + NADPH + H(+) = S-(hydroxysulfenamide)glutathione + NADP(+). In terms of biological role, catalyzes the NADPH-dependent reduction of a wide variety of carbonyl-containing compounds to their corresponding alcohols. Displays enzymatic activity towards endogenous metabolites such as aromatic and aliphatic aldehydes, ketones, monosaccharides and bile acids, with a preference for negatively charged substrates, such as glucuronate and succinic semialdehyde. Plays an important role in ascorbic acid biosynthesis by catalyzing the reduction of D-glucuronic acid and D-glucurono-gamma-lactone. Functions as a detoxifiying enzyme by reducing a range of toxic aldehydes. Reduces methylglyoxal and 3-deoxyglucosone, which are present at elevated levels under hyperglycemic conditions and are cytotoxic. Involved also in the detoxification of lipid-derived aldehydes like acrolein. Plays a role in the activation of procarcinogens, such as polycyclic aromatic hydrocarbon trans-dihydrodiols, and in the metabolism of various xenobiotics and drugs. Also acts as an inhibitor of protein S-nitrosylation by mediating degradation of S-nitroso-coenzyme A (S-nitroso-CoA), a cofactor required to S-nitrosylate proteins. S-nitroso-CoA reductase activity is involved in reprogramming intermediary metabolism in renal proximal tubules, notably by inhibiting protein S-nitrosylation of isoform 2 of PKM (PKM2). Also acts as a S-nitroso-glutathione reductase by catalyzing the NADPH-dependent reduction of S-nitrosoglutathione. Displays no reductase activity towards retinoids. The polypeptide is Aldo-keto reductase family 1 member A1 (Bos taurus (Bovine)).